We begin with the raw amino-acid sequence, 76 residues long: cAMP-dependent protein kinase inhibitor alpha (76 aa).

T2 is modified (N-acetylthreonine). The disordered stretch occupies residues 49 to 76 (KTEGEDDGQRSSTEQSGEAQGEAAKSES).

It belongs to the PKI family. In terms of tissue distribution, present at high levels in skeletal muscle and brain but is present at lower levels in heart, testis and liver.

Extremely potent competitive inhibitor of cAMP-dependent protein kinase activity, this protein interacts with the catalytic subunit of the enzyme after the cAMP-induced dissociation of its regulatory chains. This Mus musculus (Mouse) protein is cAMP-dependent protein kinase inhibitor alpha (Pkia).